The chain runs to 166 residues: Large ribosomal subunit protein uL10 (166 aa).

It belongs to the universal ribosomal protein uL10 family. As to quaternary structure, part of the ribosomal stalk of the 50S ribosomal subunit. The N-terminus interacts with L11 and the large rRNA to form the base of the stalk. The C-terminus forms an elongated spine to which L12 dimers bind in a sequential fashion forming a multimeric L10(L12)X complex.

Forms part of the ribosomal stalk, playing a central role in the interaction of the ribosome with GTP-bound translation factors. The polypeptide is Large ribosomal subunit protein uL10 (Shewanella baltica (strain OS223)).